Here is a 144-residue protein sequence, read N- to C-terminus: Universal stress protein A homolog 1 (144 aa).

This sequence belongs to the universal stress protein A family. As to quaternary structure, homodimer.

It localises to the cytoplasm. In terms of biological role, involved in stress response. The sequence is that of Universal stress protein A homolog 1 (uspA1) from Coxiella burnetii (strain RSA 493 / Nine Mile phase I).